The following is a 151-amino-acid chain: Small ribosomal subunit protein uS19 (151 aa).

The protein belongs to the universal ribosomal protein uS19 family.

This Picea mariana (Black spruce) protein is Small ribosomal subunit protein uS19 (RPS15).